The primary structure comprises 445 residues: Putrescine hydroxycinnamoyltransferase 1 (445 aa).

Active-site proton acceptor residues include His-154 and Asp-388.

The protein belongs to the plant acyltransferase family. In terms of tissue distribution, expressed in leaves.

Hydroxycinnamoyl transferase that catalyzes the transfer of an acyl from p-coumaryol-CoA to putrescine, to produce coumaroyl putrescine. In Oryza sativa subsp. japonica (Rice), this protein is Putrescine hydroxycinnamoyltransferase 1.